Reading from the N-terminus, the 504-residue chain is Acetyltransferase pyiB (504 aa).

The signal sequence occupies residues 1 to 18 (MGFLSAGGLWASLFRARI). N-linked (GlcNAc...) asparagine glycosylation occurs at asparagine 84. Histidine 181 functions as the Proton acceptor in the catalytic mechanism. N-linked (GlcNAc...) asparagine glycans are attached at residues asparagine 413 and asparagine 467.

Belongs to the plant acyltransferase family.

It functions in the pathway mycotoxin biosynthesis. Functionally, acetyltransferase; part of the gene cluster that mediates the biosynthesis of the mycotoxin pyrichalasin H, a tyrosine-derived cytochalasan that inhibits the growth of rice seedlings, but also inhibits lymphocyte capping and actin polymerization and alters cell morphology. Pyrichalasin H is indicated as the responsible agent for the genus-specific pathogenicity of M.grisea toward crabgrass. The first step in the pathway is catalyzed by the O-methyltransferase pyiA which methylates free tyrosine to generate the precursor O-methyltyrosine. The hybrid PKS-NRPS pyiS, assisted by the enoyl reductase pyiC, are responsible for fusion of the O-methyltyrosine precursor and the polyketide backbone. The polyketide synthase module (PKS) of pyiS is responsible for the synthesis of the polyketide backbone and the downstream nonribosomal peptide synthetase (NRPS) amidates the carboxyl end of the polyketide with the O-methyltyrosine precursor. As the NRPS A-domain demonstrates substrate tolerance, pyiS can also use phenylalanine, tyrosine and even para-chlorophenylalanine as amino acid precursor, which leads to the production of novel cytochalasans, including halogenated cytochalasans. Because pyiS lacks a designated enoylreductase (ER) domain, the required activity is provided the enoyl reductase pyiC. Reduction by the hydrolyase pyiE leads to 1,5-dihydropyrrolone, which is substrate for dehydration and intra-molecular Diels-Alder cyclization by the Diels-Alderase pyiF to yield the required isoindolone-fused macrocycle. The tailoring cytochrome P450 monooxygenases piyD and piyG catalyze the hydroxylation at C-18 and C-7, respectivily, whereas the short-chain dehydrogenase/reductase pyiH reduces the carbonyl at C-21 in preparation for the transfer of an acetyl group by the acetyltransferase pyiB. These 3 reactions whose order is not clear yet, lead to the production of O-methylpyrichalasin J, a deacetylated pyrichalasin H. Finally, pyiB to converts O-methylpyrichalasin J into the final product pyrichalasin H via acetylation of C-21. This is Acetyltransferase pyiB from Pyricularia grisea (Crabgrass-specific blast fungus).